The primary structure comprises 279 residues: Large ribosomal subunit protein uL2 (279 aa).

The disordered stretch occupies residues 223–279 (VAMNPVDHPMGGGEGRSSGGHPRSRKGLYAKGGKTRSANKYSKNMIVKKRVNKRLSK). Residues 268–279 (IVKKRVNKRLSK) are compositionally biased toward basic residues.

The protein belongs to the universal ribosomal protein uL2 family. As to quaternary structure, part of the 50S ribosomal subunit. Forms a bridge to the 30S subunit in the 70S ribosome.

In terms of biological role, one of the primary rRNA binding proteins. Required for association of the 30S and 50S subunits to form the 70S ribosome, for tRNA binding and peptide bond formation. It has been suggested to have peptidyltransferase activity; this is somewhat controversial. Makes several contacts with the 16S rRNA in the 70S ribosome. The protein is Large ribosomal subunit protein uL2 of Cytophaga hutchinsonii (strain ATCC 33406 / DSM 1761 / CIP 103989 / NBRC 15051 / NCIMB 9469 / D465).